A 105-amino-acid chain; its full sequence is Replication restart protein PriB (105 aa).

The SSB domain maps to 1 to 102 (MTANRLTLSG…LHAEQIELID (102 aa)).

Belongs to the PriB family. Homodimer. Interacts with PriA and DnaT. Component of the replication restart primosome. Primosome assembly occurs via a 'hand-off' mechanism. PriA binds to replication forks, subsequently PriB then DnaT bind; DnaT then displaces ssDNA to generate the helicase loading substrate.

In terms of biological role, involved in the restart of stalled replication forks, which reloads the replicative helicase on sites other than the origin of replication; the PriA-PriB pathway is the major replication restart pathway. During primosome assembly it facilitates complex formation between PriA and DnaT on DNA; stabilizes PriA on DNA. Stimulates the DNA unwinding activity of PriA helicase. The protein is Replication restart protein PriB of Erwinia tasmaniensis (strain DSM 17950 / CFBP 7177 / CIP 109463 / NCPPB 4357 / Et1/99).